Consider the following 230-residue polypeptide: Flagellar L-ring protein (230 aa).

The signal sequence occupies residues Met1 to Gly22. Residue Cys23 is the site of N-palmitoyl cysteine attachment. Cys23 carries S-diacylglycerol cysteine lipidation.

Belongs to the FlgH family. As to quaternary structure, the basal body constitutes a major portion of the flagellar organelle and consists of four rings (L,P,S, and M) mounted on a central rod.

Its subcellular location is the cell outer membrane. The protein resides in the bacterial flagellum basal body. Its function is as follows. Assembles around the rod to form the L-ring and probably protects the motor/basal body from shearing forces during rotation. This Stenotrophomonas maltophilia (strain R551-3) protein is Flagellar L-ring protein.